Here is a 361-residue protein sequence, read N- to C-terminus: [LysW]-lysine hydrolase (361 aa).

Position 67 (histidine 67) interacts with Zn(2+). The active site involves aspartate 69. Aspartate 91 lines the Zn(2+) pocket. Glutamate 124 functions as the Proton acceptor in the catalytic mechanism. The Zn(2+) site is built by glutamate 125, glutamate 148, and histidine 326.

Belongs to the peptidase M20A family. LysK subfamily. Zn(2+) is required as a cofactor. Requires Co(2+) as cofactor.

It localises to the cytoplasm. It catalyses the reaction [amino-group carrier protein]-C-terminal-gamma-(L-lysyl)-L-glutamate + H2O = [amino-group carrier protein]-C-terminal-L-glutamate + L-lysine. Its pathway is amino-acid biosynthesis; L-lysine biosynthesis via AAA pathway; L-lysine from L-alpha-aminoadipate (Thermus route): step 5/5. Functionally, catalyzes the release of L-lysine from [LysW]-gamma-L-lysine. The polypeptide is [LysW]-lysine hydrolase (Thermus thermophilus (strain ATCC 27634 / DSM 579 / HB8)).